The primary structure comprises 666 residues: Frizzled-3 (666 aa).

A signal peptide spans 1–22 (MAVSWIVFDLWLLTVFLGQIGG). Positions 23 to 136 (HSLFSCEPIT…CSRFPDCDEP (114 aa)) constitute an FZ domain. Topologically, residues 23–205 (HSLFSCEPIT…REELSFARYF (183 aa)) are extracellular. 5 disulfides stabilise this stretch: Cys-28–Cys-89, Cys-36–Cys-82, Cys-73–Cys-110, Cys-99–Cys-133, and Cys-103–Cys-127. A glycan (N-linked (GlcNAc...) asparagine) is linked at Asn-42. Residues 206 to 226 (IGLISIICLSATLFTFLTFLI) traverse the membrane as a helical segment. The Cytoplasmic segment spans residues 227 to 237 (DVTRFRYPERP). A helical membrane pass occupies residues 238–258 (IIFYAVCYMMVSLIFFIGFLL). Topologically, residues 259–288 (EDRVACNASSPAQYKASTVTQGSHNKACTM) are extracellular. Asn-265 is a glycosylation site (N-linked (GlcNAc...) asparagine). Residues 289-309 (LFMVLYFFTMAGSVWWVILTI) traverse the membrane as a helical segment. The Cytoplasmic portion of the chain corresponds to 310 to 328 (TWFLAAVPKWGSEAIEKKA). A helical transmembrane segment spans residues 329 to 349 (LLFHASAWGIPGTLTIILLAM). At 350–374 (NKIEGDNISGVCFVGLYDVDALRYF) the chain is on the extracellular side. The N-linked (GlcNAc...) asparagine glycan is linked to Asn-356. The chain crosses the membrane as a helical span at residues 375–395 (VLAPLCLYVVVGVSLLLAGII). Residues 396 to 420 (SLNRVRIEIPLEKENQDKLVKFMIR) are Cytoplasmic-facing. Residues 421-441 (IGVFSILYLVPLLVVIGCYFY) traverse the membrane as a helical segment. At 442-477 (EQAYRGIWETTWIQERCREYHIPCPYQVTQMSRPDL) the chain is on the extracellular side. A helical membrane pass occupies residues 478-498 (ILFLMKYLMALIVGIPSIFWV). Over 499–666 (GSKKTCFEWA…RVIEEDGTSA (168 aa)) the chain is Cytoplasmic. A Lys-Thr-X-X-X-Trp motif, mediates interaction with the PDZ domain of Dvl family members motif is present at residues 502–507 (KTCFEW). A disordered region spans residues 538–666 (RDPNTPIIRK…RVIEEDGTSA (129 aa)). Polar residues predominate over residues 550 to 565 (GTSTQGTSTHASSTQL). A compositionally biased stretch (basic and acidic residues) spans 617–638 (LTDHSRHSSSHRLNEQSRHSSI). Residues 639-656 (RDLSNNPMTHITHGTSMN) show a composition bias toward polar residues.

It belongs to the G-protein coupled receptor Fz/Smo family. As to quaternary structure, interacts with VANGL2. Ubiquitinated by ZNRF3, leading to its degradation by the proteasome. In terms of tissue distribution, expressed in the cortex, diencephalon, rostral brainstem and little or no staining is seen in the striatum or cerebellum. Expressed in both hair cells and supporting cells in the utricle, saccule, cristae and the organ of Corti in the inner ear (at protein level). Highly expressed in the CNS. In skin, it is restricted to the epidermis and to the developing hair follicle.

The protein resides in the membrane. Its subcellular location is the cell membrane. It localises to the cell surface. It is found in the apical cell membrane. Functionally, receptor for Wnt proteins. Most of frizzled receptors are coupled to the beta-catenin canonical signaling pathway, which leads to the activation of disheveled proteins, inhibition of GSK-3 kinase, nuclear accumulation of beta-catenin and activation of Wnt target genes. A second signaling pathway involving PKC and calcium fluxes has been seen for some family members, but it is not yet clear if it represents a distinct pathway or if it can be integrated in the canonical pathway, as PKC seems to be required for Wnt-mediated inactivation of GSK-3 kinase. Both pathways seem to involve interactions with G-proteins. Activation by Wnt5A stimulates PKC activity via a G-protein-dependent mechanism. Involved in transduction and intercellular transmission of polarity information during tissue morphogenesis and/or in differentiated tissues. Plays a role in controlling early axon growth and guidance processes necessary for the formation of a subset of central and peripheral major fiber tracts. Required for the development of major fiber tracts in the central nervous system, including: the anterior commissure, the corpus callosum, the thalamocortical, corticothalamic and nigrostriatal tracts, the corticospinal tract, the fasciculus retroflexus, the mammillothalamic tract, the medial lemniscus, and ascending fiber tracts from the spinal cord to the brain. In the peripheral nervous system, controls axon growth in distinct populations of cranial and spinal motor neurons, including the facial branchimotor nerve, the hypoglossal nerve, the phrenic nerve, and motor nerves innervating dorsal limbs. Involved in the migration of cranial neural crest cells. May also be implicated in the transmission of sensory information from the trunk and limbs to the brain. Controls commissural sensory axons guidance after midline crossing along the anterior-posterior axis in the developing spinal cord in a Wnt-dependent signaling pathway. Together with FZD6, is involved in the neural tube closure and plays a role in the regulation of the establishment of planar cell polarity (PCP), particularly in the orientation of asymmetric bundles of stereocilia on the apical faces of a subset of auditory and vestibular sensory cells located in the inner ear. Promotes neurogenesis by maintaining sympathetic neuroblasts within the cell cycle in a beta-catenin-dependent manner. This chain is Frizzled-3 (Fzd3), found in Mus musculus (Mouse).